We begin with the raw amino-acid sequence, 146 residues long: MAVYLLAVAILFCIQGWPLGTVQGQVMPFMEVYRHSVCQPRETLVSILEEYPGEISHIFRPSCVTALRCGGCCTDESLECTATGKRSVGREIMRLSPHKGTSEKEVMQFTEHTDCECRPRSASGVNSRKHKRNPEEGEPRAKFPFV.

The N-terminal stretch at 1–24 (MAVYLLAVAILFCIQGWPLGTVQG) is a signal peptide. Pyrrolidone carboxylic acid is present on Gln25. Cystine bridges form between Cys38–Cys80, Cys69–Cys115, and Cys73–Cys117. The segment at 118-146 (RPRSASGVNSRKHKRNPEEGEPRAKFPFV) is disordered. The span at 133 to 146 (NPEEGEPRAKFPFV) shows a compositional bias: basic and acidic residues.

The protein belongs to the PDGF/VEGF growth factor family. Snake venom VEGF subfamily. In terms of assembly, homodimer; disulfide-linked. Interacts with VEGF receptor-1 (FLT1) with a high affinity, whereas it binds to VEGF receptor-2 (KDR) with a low affinity. Does not bind VEGF receptor-3 (FLT4). In terms of tissue distribution, expressed by the venom gland.

Its subcellular location is the secreted. Functionally, snake venom VEGFs that may contribute to venom dispersion and prey subjugation by inducing vascular permeability and hypotension. This protein induces an increase in capillary permeability after intradermal injection, as well as a drastic hypotensive effect after intravenous injection. The hypotension is mediated by nitric oxide (NO), which is produced by VEGF-activated endothelium NO synthase. Also induces angiogenesis in vitro. Like other crotalid VEGFs, this protein interacts with VEGF receptor-1 (FLT1) with a high affinity, whereas it binds to VEGF receptor-2 (KDR) with a low affinity. The protein is Snake venom vascular endothelial growth factor toxin of Bothrops jararaca (Jararaca).